A 537-amino-acid chain; its full sequence is MGTYKKEKSRIGREGANEKKPGNLRVKGENFYRNAKDVARVNMYRGGKAKYNAAGELVRAAEFQSSEVPKARIQPDRRWFNNTRVIAQPTLTQFREAMGQKLNDPYQVLLRRNKLPMSLLQENTEIPKVRVLESEPFENTFGPKSQRKRPKISFDSVAELAKESDEKQNAYEEKIEERILANPDESDDVMLAARDAIFSKGQSKRIWNELYKVIDSSDVLIQVLDARDPVGTRCGTVERYLRNEASHKHMILVLNKVDLVPTSVAAAWVKILAKEYPTIAFHASINNSFGKGSLIQILRQFASLHSDKKQISVGLIGFPNAGKSSIINTLRKKKVCNVAPIPGETKVWQYVALMKRIFLIDCPGIVPPSSNDSDAELLLKGVVRVENVSNPEAYIPTVLSRCKVKHLERTYEISGWNDSTEFLAKLAKKGGRLLKGGEPDEASVAKMVLNDFMRGKIPWFIGPKGLSSSNDEINSSQKVATQQTEGSDQDGEEAEEEWHGISDDGKADESESTKPVAEGSASESTDESAVDDNKNRS.

The segment at 1–24 is disordered; the sequence is MGTYKKEKSRIGREGANEKKPGNL. A Phosphoserine modification is found at S186. Positions 207-368 constitute a CP-type G domain; that stretch reads WNELYKVIDS…LIDCPGIVPP (162 aa). GTP contacts are provided by residues 317-324 and 361-365; these read GFPNAGKS and DCPGI. Polar residues predominate over residues 468-486; the sequence is SSNDEINSSQKVATQQTEG. The interval 468-537 is disordered; that stretch reads SSNDEINSSQ…SAVDDNKNRS (70 aa). T484 carries the phosphothreonine modification. S487 bears the Phosphoserine mark. Positions 487-496 are enriched in acidic residues; it reads SDQDGEEAEE. Residues 497-512 are compositionally biased toward basic and acidic residues; that stretch reads EWHGISDDGKADESES.

The protein belongs to the TRAFAC class YlqF/YawG GTPase family. NOG2 subfamily.

The protein resides in the nucleus. It is found in the nucleolus. Its function is as follows. GTPase that associates with pre-60S ribosomal subunits in the nucleolus and is required for their nuclear export and maturation. This is Nucleolar GTP-binding protein 2 (nog2) from Schizosaccharomyces pombe (strain 972 / ATCC 24843) (Fission yeast).